The sequence spans 405 residues: 3-isopropylmalate dehydrogenase (405 aa).

86–104 contacts NAD(+); sequence GAANTVWTTPDGRTDVRPE. Residues arginine 111, arginine 121, arginine 148, and aspartate 237 each coordinate substrate. Mg(2+) contacts are provided by aspartate 237, aspartate 262, and aspartate 266. 301-312 contributes to the NAD(+) binding site; the sequence is GSAPDLGKQKVN. The interval 352 to 371 is disordered; sequence ADIGGSSSTSEVGDLLPTRS.

Belongs to the isocitrate and isopropylmalate dehydrogenases family. As to quaternary structure, homodimer. Mg(2+) serves as cofactor. It depends on Mn(2+) as a cofactor.

The protein localises to the cytoplasm. The catalysed reaction is (2R,3S)-3-isopropylmalate + NAD(+) = 4-methyl-2-oxopentanoate + CO2 + NADH. It participates in amino-acid biosynthesis; L-leucine biosynthesis; L-leucine from 3-methyl-2-oxobutanoate: step 3/4. Its function is as follows. Catalyzes the oxidation of 3-carboxy-2-hydroxy-4-methylpentanoate (3-isopropylmalate) to 3-carboxy-4-methyl-2-oxopentanoate. The product decarboxylates to 4-methyl-2 oxopentanoate. The sequence is that of 3-isopropylmalate dehydrogenase (LEU2) from Yarrowia lipolytica (strain CLIB 122 / E 150) (Yeast).